The chain runs to 285 residues: MDAIKKKMQAMKLEKDNALDRALLCENQARDANLRAEKAEEEARTLQKKIQTIENDLDQTQGQETLVNGKLEGKEKALQNAESEVAALNRRIQLLGEDLDRSEERLASATAKLSEASAAADESERARKILENRSLADEERMDALENQLKEARFLAEEADKKYDEVARKLAMVEADLERAEERAEAGEAKIVELEEELRVVGNNLKSLEVSEEKANQREEEYKNQIKTLTTRLKEAEARAEFAERSVQKLQKEVDRLEDELVSEKEKYREIGDDLDTAFVELILKE.

Residues 1 to 273 (MDAIKKKMQA…KEKYREIGDD (273 aa)) adopt a coiled-coil conformation.

The protein belongs to the tropomyosin family. Homodimer.

In terms of biological role, tropomyosin, in association with the troponin complex, plays a central role in the calcium dependent regulation of muscle contraction. The sequence is that of Tropomyosin from Chironomus kiiensis (Midge).